A 251-amino-acid polypeptide reads, in one-letter code: Uroporphyrinogen-III synthase (251 aa).

The tract at residues 231-251 (PAPNPESLASSIVAFDEENSS) is disordered.

This sequence belongs to the uroporphyrinogen-III synthase family.

The catalysed reaction is hydroxymethylbilane = uroporphyrinogen III + H2O. It functions in the pathway porphyrin-containing compound metabolism; protoporphyrin-IX biosynthesis; coproporphyrinogen-III from 5-aminolevulinate: step 3/4. Catalyzes cyclization of the linear tetrapyrrole, hydroxymethylbilane, to the macrocyclic uroporphyrinogen III. This is Uroporphyrinogen-III synthase (ups1) from Schizosaccharomyces pombe (strain 972 / ATCC 24843) (Fission yeast).